The following is a 460-amino-acid chain: Argininosuccinate lyase (460 aa).

This sequence belongs to the lyase 1 family. Argininosuccinate lyase subfamily.

The protein localises to the cytoplasm. The catalysed reaction is 2-(N(omega)-L-arginino)succinate = fumarate + L-arginine. Its pathway is amino-acid biosynthesis; L-arginine biosynthesis; L-arginine from L-ornithine and carbamoyl phosphate: step 3/3. This is Argininosuccinate lyase from Prosthecochloris aestuarii (strain DSM 271 / SK 413).